The chain runs to 422 residues: Probable tRNA pseudouridine synthase D (422 aa).

The active-site Nucleophile is aspartate 83. Residues glycine 164 to lysine 386 enclose the TRUD domain.

This sequence belongs to the pseudouridine synthase TruD family.

The catalysed reaction is uridine(13) in tRNA = pseudouridine(13) in tRNA. In terms of biological role, could be responsible for synthesis of pseudouridine from uracil-13 in transfer RNAs. The polypeptide is Probable tRNA pseudouridine synthase D (Thermococcus sibiricus (strain DSM 12597 / MM 739)).